The following is a 668-amino-acid chain: Endoplasmic reticulum oxidoreductin-1 (668 aa).

Positions 1 to 22 (MKPASRLFYLSLFALWSPEAQC) are cleaved as a signal peptide. Disulfide bonds link cysteine 79-cysteine 413, cysteine 89-cysteine 94, cysteine 150-cysteine 352, and cysteine 416-cysteine 419. The interval 116–142 (KLEGPRAKHPGKSVQKEEPKRPLQGKL) is disordered. FAD is bound by residues arginine 186, threonine 188, tryptophan 199, serine 282, and histidine 285. 2 N-linked (GlcNAc...) asparagine glycosylation sites follow: asparagine 298 and asparagine 307. Residue arginine 314 coordinates FAD. The N-linked (GlcNAc...) asparagine glycan is linked to asparagine 406. Cysteine 416 serves as the catalytic Nucleophile. The active site involves cysteine 419. N-linked (GlcNAc...) asparagine glycosylation is present at asparagine 443. Disordered stretches follow at residues 488–519 (VEESEEGQQPQSHEQIEGSENSGAHHIPDRAK) and 554–597 (GVTP…DPNF). Residues 494-509 (GQQPQSHEQIEGSENS) show a composition bias toward polar residues. Residues 570–581 (DNNDDDDDDDEF) show a composition bias toward acidic residues.

It belongs to the EROs family. As to quaternary structure, may function both as a monomer and a homodimer. FAD is required as a cofactor.

The protein localises to the endoplasmic reticulum membrane. In terms of biological role, essential oxidoreductase that oxidizes proteins in the endoplasmic reticulum to produce disulfide bonds. Acts by oxidizing directly pdi1 isomerase through a direct disulfide exchange. Does not act as a direct oxidant of folding substrate, but relies on pdi1 to transfer oxidizing equivalent. Does not oxidize all pdi related proteins, suggesting that it can discriminate between pdi1 and related proteins. Its reoxidation probably involves electron transfer to molecular oxygen via FAD. Acts independently of glutathione. May be responsible for a significant proportion of reactive oxygen species (ROS) in the cell, thereby being a source of oxidative stress. The protein is Endoplasmic reticulum oxidoreductin-1 (ero-1) of Neurospora crassa (strain ATCC 24698 / 74-OR23-1A / CBS 708.71 / DSM 1257 / FGSC 987).